The primary structure comprises 205 residues: Large ribosomal subunit protein bL21 (205 aa).

Positions 107–137 (APAKKAAAKKEEAPKADTAPKAAAAPTEEAA) are disordered. The span at 122–137 (ADTAPKAAAAPTEEAA) shows a compositional bias: low complexity.

This sequence belongs to the bacterial ribosomal protein bL21 family. In terms of assembly, part of the 50S ribosomal subunit. Contacts protein L20.

Its function is as follows. This protein binds to 23S rRNA in the presence of protein L20. In Hyphomonas neptunium (strain ATCC 15444), this protein is Large ribosomal subunit protein bL21.